The following is a 112-amino-acid chain: MVELSSVISKFYNDYVQNTPKKLKLVDIYLGYILLTGIIQFVYCCLVGTFPFNSFLSGFISTVSCFVLAVCLRLQANPQNKSVFAGISPERGFADFIFAHVILHLVVMNFIG.

Residues 1 to 27 are Cytoplasmic-facing; sequence MVELSSVISKFYNDYVQNTPKKLKLVD. The chain crosses the membrane as a helical span at residues 28–48; that stretch reads IYLGYILLTGIIQFVYCCLVG. The Lumenal portion of the chain corresponds to 49-51; it reads TFP. A helical transmembrane segment spans residues 52-72; the sequence is FNSFLSGFISTVSCFVLAVCL. The Cytoplasmic segment spans residues 73–91; it reads RLQANPQNKSVFAGISPER. The chain crosses the membrane as a helical span at residues 92-112; that stretch reads GFADFIFAHVILHLVVMNFIG.

Belongs to the DAD/OST2 family. In terms of assembly, component of the oligosaccharyltransferase (OST) complex.

The protein localises to the endoplasmic reticulum membrane. It functions in the pathway protein modification; protein glycosylation. In terms of biological role, subunit of the oligosaccharyl transferase (OST) complex that catalyzes the initial transfer of a defined glycan (Glc(3)Man(9)GlcNAc(2) in eukaryotes) from the lipid carrier dolichol-pyrophosphate to an asparagine residue within an Asn-X-Ser/Thr consensus motif in nascent polypeptide chains, the first step in protein N-glycosylation. N-glycosylation occurs cotranslationally and the complex associates with the Sec61 complex at the channel-forming translocon complex that mediates protein translocation across the endoplasmic reticulum (ER). All subunits are required for a maximal enzyme activity. Probably as part of the N-glycosylation pathway, plays a role in the regulation of tissue growth and apoptosis. The protein is Dolichyl-diphosphooligosaccharide--protein glycosyltransferase subunit DAD1 of Drosophila melanogaster (Fruit fly).